The sequence spans 368 residues: D-alanine--D-alanine ligase (368 aa).

The ATP-grasp domain maps to 151 to 358; the sequence is KKLLAAEGLP…YGTLVSTLVD (208 aa). 179–234 contributes to the ATP binding site; the sequence is KSRLHLPVFVKPARGGSSIGITRVAEWAALDDAIAHARLHDPKVIVESGIIGREVE. Mg(2+)-binding residues include aspartate 313, glutamate 325, and asparagine 327.

This sequence belongs to the D-alanine--D-alanine ligase family. It depends on Mg(2+) as a cofactor. The cofactor is Mn(2+).

Its subcellular location is the cytoplasm. It catalyses the reaction 2 D-alanine + ATP = D-alanyl-D-alanine + ADP + phosphate + H(+). It functions in the pathway cell wall biogenesis; peptidoglycan biosynthesis. Cell wall formation. This Rhodococcus jostii (strain RHA1) protein is D-alanine--D-alanine ligase.